A 233-amino-acid polypeptide reads, in one-letter code: MAKAGKRIEKAREGIDRKKTYGLDEAVKMVKDRASVKFDETIEVAIALGVDPRHADQMVRGVVALPSGSGRTVRVAVFAKGDKADQARAAGADIVGDDDLAEIVQSGKIDFDRCIATPDMMPLVGRLGKVLGPRGLMPNPKVGTVTPDVAEAVKAAKGGAVEFRVEKAGIIHAGVGKASFSEDQILVNIRALIDAVQKAKPTGAKGTYIKRIAISSTMGPGVKVEPQSVAASA.

It belongs to the universal ribosomal protein uL1 family. In terms of assembly, part of the 50S ribosomal subunit.

In terms of biological role, binds directly to 23S rRNA. The L1 stalk is quite mobile in the ribosome, and is involved in E site tRNA release. Functionally, protein L1 is also a translational repressor protein, it controls the translation of the L11 operon by binding to its mRNA. The chain is Large ribosomal subunit protein uL1 from Parvibaculum lavamentivorans (strain DS-1 / DSM 13023 / NCIMB 13966).